The primary structure comprises 206 residues: Guanylate kinase (206 aa).

Residues 4–182 (ANLFIISAPS…AVQNLIHIIS (179 aa)) enclose the Guanylate kinase-like domain. 11–18 (APSGAGKT) provides a ligand contact to ATP.

This sequence belongs to the guanylate kinase family.

The protein localises to the cytoplasm. The enzyme catalyses GMP + ATP = GDP + ADP. Essential for recycling GMP and indirectly, cGMP. The polypeptide is Guanylate kinase (Coxiella burnetii (strain RSA 493 / Nine Mile phase I)).